A 605-amino-acid chain; its full sequence is Aspartate--tRNA(Asp/Asn) ligase (605 aa).

Glu-176 lines the L-aspartate pocket. Residues 200–203 (QQFK) are aspartate. Residues Arg-222 and His-452 each coordinate L-aspartate. Residue 222 to 224 (RDE) participates in ATP binding. Glu-490 lines the ATP pocket. Residue Arg-497 coordinates L-aspartate. 542 to 545 (GIDR) is an ATP binding site.

The protein belongs to the class-II aminoacyl-tRNA synthetase family. Type 1 subfamily. As to quaternary structure, homodimer.

Its subcellular location is the cytoplasm. The catalysed reaction is tRNA(Asx) + L-aspartate + ATP = L-aspartyl-tRNA(Asx) + AMP + diphosphate. Aspartyl-tRNA synthetase with relaxed tRNA specificity since it is able to aspartylate not only its cognate tRNA(Asp) but also tRNA(Asn). Reaction proceeds in two steps: L-aspartate is first activated by ATP to form Asp-AMP and then transferred to the acceptor end of tRNA(Asp/Asn). This is Aspartate--tRNA(Asp/Asn) ligase from Rickettsia prowazekii (strain Madrid E).